The sequence spans 421 residues: Histidine--tRNA ligase (421 aa).

The protein belongs to the class-II aminoacyl-tRNA synthetase family. In terms of assembly, homodimer.

It is found in the cytoplasm. The catalysed reaction is tRNA(His) + L-histidine + ATP = L-histidyl-tRNA(His) + AMP + diphosphate + H(+). The polypeptide is Histidine--tRNA ligase (Francisella tularensis subsp. holarctica (strain LVS)).